Consider the following 86-residue polypeptide: Small ribosomal subunit protein bS16 (86 aa).

The protein belongs to the bacterial ribosomal protein bS16 family.

In Stenotrophomonas maltophilia (strain R551-3), this protein is Small ribosomal subunit protein bS16.